The sequence spans 421 residues: O-glycosyltransferase braB (421 aa).

Residues 1–26 are disordered; the sequence is MVPSVMEGAPQLGITSTDTSSAGVPP. Polar residues predominate over residues 13–22; it reads GITSTDTSSA.

It belongs to the afumC glycosyltransferase family.

Its pathway is secondary metabolite biosynthesis. In terms of biological role, O-glycosyltransferase; part of the gene cluster that mediates the biosynthesis of the brasilane terpene glycosides brasilane D and E. The biosynthesis starts with the activity of the terpene cyclase braA that converts farnesyl pyrophosphate into the sesquiterpene alcohol trichobrasilenol. Subsequently, trichobrasilenol is glycosylated by the O-glycosyltransferase braB putatively using UDP-GlcNAc as sugar donor to yield brasilane A. The latter then undergoes two rounds of oxidation performed by the cytochrome P450 monooxygenase braC. In the first round braC hydroxylates C-12 forming brasilane D, which serves as substrate in the second round to establish the epoxide at the bond between C-5 and C-10 and oxidize the alcohol at C-12 to an aldehyde leading to the final product brasilane E. BraB is also able to glycosylate geraniol, linalool, perillyl alcohol, 3,4-dichlorophenol and, to a lesser extend, benzyl alcohol. The sequence is that of O-glycosyltransferase braB from Annulohypoxylon truncatum (Hypoxylon truncatum).